The sequence spans 142 residues: Ribosome maturation factor RimP (142 aa).

Belongs to the RimP family.

Its subcellular location is the cytoplasm. Functionally, required for maturation of 30S ribosomal subunits. This is Ribosome maturation factor RimP from Sulfurovum sp. (strain NBC37-1).